The primary structure comprises 244 residues: Ribonuclease PH (244 aa).

Residues Arg-86 and 124 to 126 (GTR) each bind phosphate.

This sequence belongs to the RNase PH family. In terms of assembly, homohexameric ring arranged as a trimer of dimers.

It catalyses the reaction tRNA(n+1) + phosphate = tRNA(n) + a ribonucleoside 5'-diphosphate. Functionally, phosphorolytic 3'-5' exoribonuclease that plays an important role in tRNA 3'-end maturation. Removes nucleotide residues following the 3'-CCA terminus of tRNAs; can also add nucleotides to the ends of RNA molecules by using nucleoside diphosphates as substrates, but this may not be physiologically important. Probably plays a role in initiation of 16S rRNA degradation (leading to ribosome degradation) during starvation. The polypeptide is Ribonuclease PH (Oceanobacillus iheyensis (strain DSM 14371 / CIP 107618 / JCM 11309 / KCTC 3954 / HTE831)).